Here is a 174-residue protein sequence, read N- to C-terminus: MTRKSRRLILIGAGLGVLALAAGLILTALNDTIVFFRTPTEVAQQQIAPGARLRLGGLVEPGSVAKSGASVRFAVTDGNSKVTVAYTGLLPDLFREGQGVVAEGVLQSDGTVKADSVLAKHDERYMPREVADALKKSGHWKEGEEGGPVPPAAKTPGPQSSAAPPAVSPARSTP.

The Cytoplasmic segment spans residues 1–7 (MTRKSRR). A helical; Signal-anchor for type II membrane protein membrane pass occupies residues 8-28 (LILIGAGLGVLALAAGLILTA). Residues 29 to 174 (LNDTIVFFRT…PAVSPARSTP (146 aa)) are Periplasmic-facing. Positions 121 and 125 each coordinate heme. Basic and acidic residues predominate over residues 130–144 (VADALKKSGHWKEGE). The disordered stretch occupies residues 130 to 174 (VADALKKSGHWKEGEEGGPVPPAAKTPGPQSSAAPPAVSPARSTP). Over residues 156-174 (PGPQSSAAPPAVSPARSTP) the composition is skewed to low complexity.

It belongs to the CcmE/CycJ family.

The protein localises to the cell inner membrane. In terms of biological role, heme chaperone required for the biogenesis of c-type cytochromes. Transiently binds heme delivered by CcmC and transfers the heme to apo-cytochromes in a process facilitated by CcmF and CcmH. This is Cytochrome c-type biogenesis protein CcmE from Azorhizobium caulinodans (strain ATCC 43989 / DSM 5975 / JCM 20966 / LMG 6465 / NBRC 14845 / NCIMB 13405 / ORS 571).